The chain runs to 160 residues: Phosphopantetheine adenylyltransferase (160 aa).

T10 serves as a coordination point for substrate. Residues 10-11 (TF) and H18 contribute to the ATP site. Substrate-binding residues include K42, M74, and R88. ATP contacts are provided by residues 89 to 91 (GLR), E99, and 124 to 130 (LSFLSSS).

It belongs to the bacterial CoaD family. In terms of assembly, homohexamer. Mg(2+) is required as a cofactor.

It localises to the cytoplasm. It catalyses the reaction (R)-4'-phosphopantetheine + ATP + H(+) = 3'-dephospho-CoA + diphosphate. The protein operates within cofactor biosynthesis; coenzyme A biosynthesis; CoA from (R)-pantothenate: step 4/5. In terms of biological role, reversibly transfers an adenylyl group from ATP to 4'-phosphopantetheine, yielding dephospho-CoA (dPCoA) and pyrophosphate. In Photorhabdus laumondii subsp. laumondii (strain DSM 15139 / CIP 105565 / TT01) (Photorhabdus luminescens subsp. laumondii), this protein is Phosphopantetheine adenylyltransferase.